Consider the following 151-residue polypeptide: Transcription elongation factor GreA (151 aa).

The stretch at 41-62 (AEYHAAREKQSFIEGRIKELEA) forms a coiled coil.

The protein belongs to the GreA/GreB family.

Functionally, necessary for efficient RNA polymerase transcription elongation past template-encoded arresting sites. The arresting sites in DNA have the property of trapping a certain fraction of elongating RNA polymerases that pass through, resulting in locked ternary complexes. Cleavage of the nascent transcript by cleavage factors such as GreA or GreB allows the resumption of elongation from the new 3'terminus. GreA releases sequences of 2 to 3 nucleotides. The protein is Transcription elongation factor GreA of Cereibacter sphaeroides (strain ATCC 17023 / DSM 158 / JCM 6121 / CCUG 31486 / LMG 2827 / NBRC 12203 / NCIMB 8253 / ATH 2.4.1.) (Rhodobacter sphaeroides).